The chain runs to 516 residues: GMP synthase [glutamine-hydrolyzing] (516 aa).

Positions K10–N201 constitute a Glutamine amidotransferase type-1 domain. The active-site Nucleophile is C87. Catalysis depends on residues H175 and E177. The region spanning W202–R391 is the GMPS ATP-PPase domain. Residue S229 to S235 coordinates ATP.

In terms of assembly, homodimer.

It carries out the reaction XMP + L-glutamine + ATP + H2O = GMP + L-glutamate + AMP + diphosphate + 2 H(+). Its pathway is purine metabolism; GMP biosynthesis; GMP from XMP (L-Gln route): step 1/1. Catalyzes the synthesis of GMP from XMP. This is GMP synthase [glutamine-hydrolyzing] from Lactobacillus acidophilus (strain ATCC 700396 / NCK56 / N2 / NCFM).